A 207-amino-acid polypeptide reads, in one-letter code: Small ribosomal subunit protein uS4 (207 aa).

Residues 32-55 are disordered; sequence CKLDSKPGQHGRTSGARTSDYGTQ. The segment covering 42–53 has biased composition (polar residues); it reads GRTSGARTSDYG. Residues 97 to 158 form the S4 RNA-binding domain; the sequence is SRLDNVVYRM…TKKKQARILE (62 aa).

Belongs to the universal ribosomal protein uS4 family. In terms of assembly, part of the 30S ribosomal subunit. Contacts protein S5. The interaction surface between S4 and S5 is involved in control of translational fidelity.

Its function is as follows. One of the primary rRNA binding proteins, it binds directly to 16S rRNA where it nucleates assembly of the body of the 30S subunit. Functionally, with S5 and S12 plays an important role in translational accuracy. This chain is Small ribosomal subunit protein uS4, found in Paraburkholderia phytofirmans (strain DSM 17436 / LMG 22146 / PsJN) (Burkholderia phytofirmans).